A 247-amino-acid polypeptide reads, in one-letter code: NifU-like scaffold protein (247 aa).

The protein belongs to the NifU family. Homodimer.

It localises to the plastid. The protein resides in the apicoplast. The protein operates within cofactor biosynthesis; iron-sulfur cluster biosynthesis. In terms of biological role, binds and transfers [4Fe-4S] iron-sulfur clusters to target proteins. In Plasmodium falciparum (isolate 3D7), this protein is NifU-like scaffold protein.